The following is a 108-amino-acid chain: Ribonuclease P protein component (108 aa).

It belongs to the RnpA family. In terms of assembly, consists of a catalytic RNA component (M1 or rnpB) and a protein subunit.

The catalysed reaction is Endonucleolytic cleavage of RNA, removing 5'-extranucleotides from tRNA precursor.. In terms of biological role, RNaseP catalyzes the removal of the 5'-leader sequence from pre-tRNA to produce the mature 5'-terminus. It can also cleave other RNA substrates such as 4.5S RNA. The protein component plays an auxiliary but essential role in vivo by binding to the 5'-leader sequence and broadening the substrate specificity of the ribozyme. In Campylobacter jejuni subsp. doylei (strain ATCC BAA-1458 / RM4099 / 269.97), this protein is Ribonuclease P protein component.